Here is a 141-residue protein sequence, read N- to C-terminus: Lysozyme 1 (141 aa).

The signal sequence occupies residues methionine 1–glycine 19. The 122-residue stretch at lysine 20–phenylalanine 141 folds into the C-type lysozyme domain. Cystine bridges form between cysteine 25-cysteine 140, cysteine 46-cysteine 130, cysteine 81-cysteine 97, and cysteine 93-cysteine 111. Glutamate 51 is an active-site residue. N-linked (GlcNAc...) asparagine glycosylation occurs at asparagine 65. Aspartate 69 is a catalytic residue. The N-linked (GlcNAc...) asparagine glycan is linked to asparagine 104.

It belongs to the glycosyl hydrolase 22 family.

The catalysed reaction is Hydrolysis of (1-&gt;4)-beta-linkages between N-acetylmuramic acid and N-acetyl-D-glucosamine residues in a peptidoglycan and between N-acetyl-D-glucosamine residues in chitodextrins.. May not function as a self-defense protein, but as a digestive enzyme, probably in the gut of the insect body. Inactive towards Micrococcus luteus. Active toward glycol chitin. The chain is Lysozyme 1 from Musca domestica (House fly).